Reading from the N-terminus, the 849-residue chain is A-kinase anchor protein 4 (849 aa).

A propeptide spanning residues 1 to 188 (MIAYCGTTTM…MAASKNTNNN (188 aa)) is cleaved from the precursor. Phosphoserine is present on residues serine 96, serine 130, serine 190, and serine 204. Residues 183-205 (KNTNNNQSPSNPATKSPSNQRSV) are compositionally biased toward polar residues. Residues 183 to 210 (KNTNNNQSPSNPATKSPSNQRSVATPEG) form a disordered region. Threonine 207 is modified (phosphothreonine). 3 positions are modified to phosphoserine: serine 213, serine 226, and serine 271. The PKA-RI and PKA-RII subunit binding domain stretch occupies residues 219–232 (FYVNRLSSLVIQMA). A Phosphotyrosine modification is found at tyrosine 301. 9 positions are modified to phosphoserine: serine 302, serine 341, serine 431, serine 442, serine 444, serine 463, serine 492, serine 497, and serine 504. The PKA-RI-alpha subunit binding domain stretch occupies residues 335–344 (YANQVASDMM). A Phosphothreonine modification is found at threonine 506. Serine 538 is subject to Phosphoserine. Position 583 is a phosphoserine; by STK33 (serine 583). Serine 628, serine 633, serine 652, and serine 702 each carry phosphoserine.

The protein belongs to the AKAP110 family. As to quaternary structure, interacts with PRKAR1A and PRKAR2A. Interacts with ENO4. Interacts with QRICH2. Phosphorylated by STK33 during sperm flagella assembly. In terms of tissue distribution, expressed in the fibrous sheath of spermatozoa (at protein level). Expressed in step 1 to step 6 spermatids, abundance then increases during steps 8 to 12, abundance decreases thereafter.

The protein resides in the cell projection. It is found in the cilium. Its subcellular location is the flagellum. Functionally, major structural component of sperm fibrous sheath. Plays a role in sperm motility. This Mus musculus (Mouse) protein is A-kinase anchor protein 4.